Here is a 114-residue protein sequence, read N- to C-terminus: Cyclin-dependent kinase 2-associated protein 1 (114 aa).

The tract at residues 18-57 (AGSVHSPSTSMATSSQYRQLLSDYGPPSLGYTQGTGNSQV) is disordered. The segment at 19–24 (GSVHSP) is interaction with CDK2AP2. Positions 20-36 (SVHSPSTSMATSSQYRQ) are enriched in polar residues. A Phosphoserine; by IKKE modification is found at S45. The segment covering 47–57 (GYTQGTGNSQV) has biased composition (polar residues).

Belongs to the CDK2AP family. In terms of assembly, homodimer. Component of the nucleosome remodeling and deacetylase (NuRD) repressor complex, composed of core proteins MTA1, MTA2, MTA3, RBBP4, RBBP7, HDAC1, HDAC2, MBD2, MBD3, and peripherally associated proteins CDK2AP1, CDK2AP2, GATAD2A, GATAD2B, CHD3, CHD4 and CHD5. The exact stoichiometry of the NuRD complex is unknown, and some subunits such as MBD2 and MBD3, GATAD2A and GATAD2B, and CHD3, CHD4 and CHD5 define mutually exclusive NuRD complexes. Interacts with monomeric unphosphorylated CDK2. Interacts with CDK2AP2. Interacts with GATAD2A. Interacts with HDAC1. Interacts with HDAC2. Interacts with MBD2. Interacts with MBD3. Interacts with RBBP4. Interacts with RBBP7. Phosphorylated in vitro by IKBKE at Ser-45.

It is found in the nucleus. It localises to the chromosome. Its function is as follows. Inhibitor of cyclin-dependent kinase CDK2. Also acts as a component of the histone deacetylase NuRD complex which participates in the remodeling of chromatin. This Mus musculus (Mouse) protein is Cyclin-dependent kinase 2-associated protein 1 (Cdk2ap1).